A 522-amino-acid chain; its full sequence is Golgin subfamily A member 6-like protein 10 (522 aa).

Over residues 1 to 11 (MWPQPRLPPHP) the composition is skewed to pro residues. The interval 1 to 77 (MWPQPRLPPH…DSATGIYGEG (77 aa)) is disordered. The span at 51–62 (NGSSPDTATSGG) shows a compositional bias: polar residues. Positions 157–328 (SKVEQLQDET…RLCEQEKLPG (172 aa)) form a coiled coil. Residues 439–452 (KELEKSGGAEEPRG) show a composition bias toward basic and acidic residues. The segment at 439–503 (KELEKSGGAE…TGEAAGGAEE (65 aa)) is disordered. Composition is skewed to low complexity over residues 456–471 (AAAA…PQGA) and 489–503 (GEAV…GAEE).

It belongs to the GOLGA6 family.

This Homo sapiens (Human) protein is Golgin subfamily A member 6-like protein 10.